The following is a 180-amino-acid chain: Cytokinin-beta-glucosidase 3 (180 aa).

In terms of biological role, hydrolyzes cytokinin glucosides thus liberating free cytokinins. In Panax ginseng (Korean ginseng), this protein is Cytokinin-beta-glucosidase 3 (ROLC3).